The sequence spans 163 residues: Nucleotide-binding protein KPN78578_03700 (163 aa).

The protein belongs to the YajQ family.

Its function is as follows. Nucleotide-binding protein. The protein is Nucleotide-binding protein KPN78578_03700 of Klebsiella pneumoniae subsp. pneumoniae (strain ATCC 700721 / MGH 78578).